A 533-amino-acid polypeptide reads, in one-letter code: D-3-phosphoglycerate dehydrogenase (533 aa).

Residue A2 is modified to N-acetylalanine. Residue S14 is modified to Phosphoserine. K21 carries the post-translational modification N6-acetyllysine; alternate. K21 is covalently cross-linked (Glycyl lysine isopeptide (Lys-Gly) (interchain with G-Cter in SUMO1); alternate). A Glycyl lysine isopeptide (Lys-Gly) (interchain with G-Cter in SUMO2); alternate cross-link involves residue K21. The residue at position 58 (K58) is an N6-acetyllysine. Residues T78, 155–156 (RI), D175, T207, 234–236 (CAR), and D260 contribute to the NAD(+) site. T78 carries the post-translational modification Phosphothreonine. Residue R236 is part of the active site. E265 is a catalytic residue. H283 acts as the Proton donor in catalysis. 283–286 (HLGA) is a binding site for NAD(+).

The protein belongs to the D-isomer specific 2-hydroxyacid dehydrogenase family. As to quaternary structure, homotetramer.

It carries out the reaction (2R)-3-phosphoglycerate + NAD(+) = 3-phosphooxypyruvate + NADH + H(+). The enzyme catalyses (R)-2-hydroxyglutarate + NAD(+) = 2-oxoglutarate + NADH + H(+). It catalyses the reaction (S)-malate + NAD(+) = oxaloacetate + NADH + H(+). It participates in amino-acid biosynthesis; L-serine biosynthesis; L-serine from 3-phospho-D-glycerate: step 1/3. In terms of biological role, catalyzes the reversible oxidation of 3-phospho-D-glycerate to 3-phosphonooxypyruvate, the first step of the phosphorylated L-serine biosynthesis pathway. Also catalyzes the reversible oxidation of 2-hydroxyglutarate to 2-oxoglutarate and the reversible oxidation of (S)-malate to oxaloacetate. The sequence is that of D-3-phosphoglycerate dehydrogenase (PHGDH) from Pongo abelii (Sumatran orangutan).